We begin with the raw amino-acid sequence, 1079 residues long: Ubiquitin carboxyl-terminal hydrolase 26 (1079 aa).

Residues 1-12 (MSRPNTRNKSKR) are compositionally biased toward basic residues. Residues 1–21 (MSRPNTRNKSKRPRADDCESP) are disordered. In terms of domain architecture, USP spans 106 to 446 (AGLTNLGATC…DAYMLMYKRI (341 aa)). The Nucleophile role is filled by cysteine 115. Catalysis depends on histidine 359, which acts as the Proton acceptor. Residues 384–419 (GLHPFGEKPGKSSDKTDQKPQGSSTADSVTNDDNNS) are disordered. Positions 388-401 (FGEKPGKSSDKTDQ) are enriched in basic and acidic residues. Positions 402–417 (KPQGSSTADSVTNDDN) are enriched in polar residues. DUSP domains are found at residues 495–598 (AYIT…DDFC), 613–715 (DVYR…FPSD), and 738–862 (AVKL…AEIV). Residues 948 to 972 (EASAAVPVPDRRTSKRSRRTTSGNS) form a disordered region. In terms of domain architecture, Ubiquitin-like spans 961-1037 (SKRSRRTTSG…LWVKDSEIYE (77 aa)).

Belongs to the peptidase C19 family.

The protein localises to the nucleus. The catalysed reaction is Thiol-dependent hydrolysis of ester, thioester, amide, peptide and isopeptide bonds formed by the C-terminal Gly of ubiquitin (a 76-residue protein attached to proteins as an intracellular targeting signal).. Functionally, recognizes and hydrolyzes the peptide bond at the C-terminal Gly of ubiquitin. Involved in the processing of poly-ubiquitin precursors as well as that of ubiquitinated proteins. Deubiquitinates H2BK143ub1 of histone H2B. This chain is Ubiquitin carboxyl-terminal hydrolase 26 (UBP26), found in Oryza sativa subsp. japonica (Rice).